We begin with the raw amino-acid sequence, 244 residues long: Purine nucleoside phosphorylase HI_0175 (244 aa).

His-70, Cys-105, and His-122 together coordinate Zn(2+).

Belongs to the purine nucleoside phosphorylase YfiH/LACC1 family. As to quaternary structure, homodimer. The cofactor is Cu(2+). Zn(2+) is required as a cofactor.

It catalyses the reaction adenosine + phosphate = alpha-D-ribose 1-phosphate + adenine. It carries out the reaction S-methyl-5'-thioadenosine + phosphate = 5-(methylsulfanyl)-alpha-D-ribose 1-phosphate + adenine. The catalysed reaction is inosine + phosphate = alpha-D-ribose 1-phosphate + hypoxanthine. The enzyme catalyses adenosine + H2O + H(+) = inosine + NH4(+). Functionally, purine nucleoside enzyme that catalyzes the phosphorolysis of adenosine and inosine nucleosides, yielding D-ribose 1-phosphate and the respective free bases, adenine and hypoxanthine. Also catalyzes the phosphorolysis of S-methyl-5'-thioadenosine into adenine and S-methyl-5-thio-alpha-D-ribose 1-phosphate. Also has adenosine deaminase activity. The polypeptide is Purine nucleoside phosphorylase HI_0175 (Haemophilus influenzae (strain ATCC 51907 / DSM 11121 / KW20 / Rd)).